The following is a 490-amino-acid chain: Betaine aldehyde dehydrogenase (490 aa).

Positions 26, 27, and 93 each coordinate K(+). Residue G150–W152 coordinates NAD(+). K162 serves as the catalytic Charge relay system. Residue K176–E179 coordinates NAD(+). V180 is a K(+) binding site. G230–S233 provides a ligand contact to NAD(+). L246 provides a ligand contact to K(+). E252 serves as the catalytic Proton acceptor. NAD(+) contacts are provided by G254, C286, and E387. C286 serves as the catalytic Nucleophile. The residue at position 286 (C286) is a Cysteine sulfenic acid (-SOH). K(+) is bound by residues K457 and G460. The active-site Charge relay system is the E464.

Belongs to the aldehyde dehydrogenase family. Dimer of dimers. The cofactor is K(+).

The enzyme catalyses betaine aldehyde + NAD(+) + H2O = glycine betaine + NADH + 2 H(+). It participates in amine and polyamine biosynthesis; betaine biosynthesis via choline pathway; betaine from betaine aldehyde: step 1/1. In terms of biological role, involved in the biosynthesis of the osmoprotectant glycine betaine. Catalyzes the irreversible oxidation of betaine aldehyde to the corresponding acid. In Escherichia coli (strain 55989 / EAEC), this protein is Betaine aldehyde dehydrogenase.